The primary structure comprises 285 residues: N(G),N(G)-dimethylarginine dimethylaminohydrolase 1 (285 aa).

Alanine 2 carries the N-acetylalanine modification. A substrate-binding site is contributed by leucine 30. A Phosphoserine modification is found at serine 33. Aspartate 73, glutamate 78, aspartate 79, arginine 98, and arginine 145 together coordinate substrate. Histidine 173 serves as the catalytic Proton donor. Cysteine 222 carries the post-translational modification S-nitrosocysteine. Valine 268 serves as a coordination point for substrate. Cysteine 274 is modified (S-nitrosocysteine). Residue cysteine 274 is the Nucleophile of the active site. Cysteine 274 provides a ligand contact to Zn(2+).

The protein belongs to the DDAH family. Monomer. As to expression, detected in skeletal muscle, lung, heart, liver, kidney and brain (at protein level).

It catalyses the reaction N(omega),N(omega)-dimethyl-L-arginine + H2O = dimethylamine + L-citrulline. The catalysed reaction is N(omega)-methyl-L-arginine + H2O = L-citrulline + methylamine. With respect to regulation, inhibited by zinc ions. In terms of biological role, hydrolyzes N(G),N(G)-dimethyl-L-arginine (ADMA) and N(G)-monomethyl-L-arginine (MMA) which act as inhibitors of NOS. Has therefore a role in the regulation of nitric oxide generation. This is N(G),N(G)-dimethylarginine dimethylaminohydrolase 1 (Ddah1) from Mus musculus (Mouse).